The chain runs to 400 residues: Sensor histidine kinase LnrJ (400 aa).

The Extracellular portion of the chain corresponds to 1 to 2 (MK). The chain crosses the membrane as a helical span at residues 3-23 (ALFFTRMFTLMVSCLMYLSIV). Topologically, residues 24–27 (KEDN) are cytoplasmic. Residues 28-48 (WFGYVFIAAGAAMYAANHVLL) traverse the membrane as a helical segment. Over 49 to 61 (TKETNAIWFCLID) the chain is Extracellular. The helical transmembrane segment at 62-82 (IAIGFSFGFIFPGTGLFIIML) threads the bilayer. Residues 83–101 (CPVAVAFFLRGFPKRTAWS) are Cytoplasmic-facing. A helical transmembrane segment spans residues 102-122 (VLCLSSILFLTVLIRTYAMFG). Topologically, residues 123 to 125 (NEF) are extracellular. The chain crosses the membrane as a helical span at residues 126 to 146 (VIDHLTSMTFVVFCGVVGKLI). The Cytoplasmic segment spans residues 147–400 (RKLLDAQDTA…GPVQQKESLS (254 aa)). Residues 190–385 (IYERNRMARE…TVNAEFSLAN (196 aa)) form the Histidine kinase domain. A Phosphohistidine; by autocatalysis modification is found at H201.

In terms of processing, autophosphorylated.

Its subcellular location is the cell membrane. It carries out the reaction ATP + protein L-histidine = ADP + protein N-phospho-L-histidine.. Its function is as follows. Required for resistance to linearmycins, a family of antibiotic-specialized metabolites produced by some streptomycetes. Member of the two-component regulatory system LnrJ/LnrK, which induces expression of the LnrLMN ABC transporter in response to linearmycins and other polyenes. Acts as a specific sensor for linearmycin, either directly through binding or indirectly through membrane perturbation. Probably activates LnrK by phosphorylation. May also promote biofilm formation. This chain is Sensor histidine kinase LnrJ, found in Bacillus subtilis (strain 168).